The sequence spans 221 residues: Abscisic acid receptor PYL1 (221 aa).

Residues 1–11 (MANSESSSSPV) are compositionally biased toward low complexity. Residues 1–22 (MANSESSSSPVNEEENSQRIST) form a disordered region. Ala2 carries the post-translational modification N-acetylalanine. The segment at 50 to 206 (YQLGNGRCSS…NLQKLASITE (157 aa)) is START-like. Abscisate contacts are provided by residues Lys86, 116 to 121 (ANTSRE), 143 to 149 (RLRNYKS), and Glu171. The short motif at 112-116 (SGLPA) is the Gate loop element. The Latch loop motif lies at 142 to 144 (HRL).

This sequence belongs to the PYR/PYL/RCAR abscisic acid intracellular receptor family. In terms of assembly, homodimer. Binds ABA on one subunit only. Interacts with HAB1, ABI1 and ABI2, and possibly with other PP2Cs. Binds to CARs protein in an ABA-independent manner, both at the plasma membrane and in the nucleus. Interacts directly with CAR1 and CAR4.

The protein resides in the cytoplasm. It is found in the nucleus. It localises to the cell membrane. Functionally, receptor for abscisic acid (ABA) required for ABA-mediated responses such as stomatal closure and germination inhibition. Inhibits the activity of group-A protein phosphatases type 2C (PP2Cs) when activated by ABA. Can be activated by both (-)-ABA and (+)-ABA. The protein is Abscisic acid receptor PYL1 (PYL1) of Arabidopsis thaliana (Mouse-ear cress).